The following is a 258-amino-acid chain: Snake venom serine protease PA (258 aa).

The first 18 residues, 1-18 (MVLIRVLANLLILQLSYA), serve as a signal peptide directing secretion. Positions 19 to 24 (QKSPEL) are excised as a propeptide. Residues 25–249 (VVGGDECNIN…YNDWIKSIIA (225 aa)) form the Peptidase S1 domain. 6 disulfide bridges follow: cysteine 31/cysteine 163, cysteine 50/cysteine 66, cysteine 98/cysteine 256, cysteine 142/cysteine 210, cysteine 174/cysteine 189, and cysteine 200/cysteine 225. Asparagine 44 is a glycosylation site (N-linked (GlcNAc...) asparagine). Catalysis depends on charge relay system residues histidine 65 and aspartate 110. Serine 204 functions as the Charge relay system in the catalytic mechanism.

Belongs to the peptidase S1 family. Snake venom subfamily. As to quaternary structure, monomer. Expressed by the venom gland.

It localises to the secreted. Its function is as follows. Snake venom serine protease that may act in the hemostasis system of the prey. This is Snake venom serine protease PA from Trimeresurus stejnegeri (Chinese green tree viper).